We begin with the raw amino-acid sequence, 368 residues long: Phosphate acyltransferase (368 aa).

It belongs to the PlsX family. Homodimer. Probably interacts with PlsY.

The protein localises to the cytoplasm. It carries out the reaction a fatty acyl-[ACP] + phosphate = an acyl phosphate + holo-[ACP]. It participates in lipid metabolism; phospholipid metabolism. In terms of biological role, catalyzes the reversible formation of acyl-phosphate (acyl-PO(4)) from acyl-[acyl-carrier-protein] (acyl-ACP). This enzyme utilizes acyl-ACP as fatty acyl donor, but not acyl-CoA. In Granulibacter bethesdensis (strain ATCC BAA-1260 / CGDNIH1), this protein is Phosphate acyltransferase.